We begin with the raw amino-acid sequence, 82 residues long: Small ribosomal subunit protein bS16c (82 aa).

Belongs to the bacterial ribosomal protein bS16 family.

It localises to the plastid. It is found in the chloroplast. This Porphyra purpurea (Red seaweed) protein is Small ribosomal subunit protein bS16c.